The following is an 833-amino-acid chain: 3-hydroxy-3-methylglutaryl-coenzyme A reductase (833 aa).

Transmembrane regions (helical) follow at residues 10-32, 91-117, 160-180, and 301-321; these read FCAR…AASV, YLLI…LFWS, LALL…LVGV, and SADY…FVFF. The linker stretch occupies residues 322 to 419; sequence EEQRNWVIDM…EEVVMLVEQS (98 aa). The tract at residues 347-374 is disordered; it reads KPKFSVGDDSNSEVSTQTEGVLEDEWPT. Over residues 354 to 365 the composition is skewed to polar residues; sequence DDSNSEVSTQTE. A catalytic region spans residues 420–833; that stretch reads HIPLHRLEAV…ENITLKVPTL (414 aa). Active-site charge relay system residues include glutamate 504 and lysine 635. Asparagine 680 carries an N-linked (GlcNAc...) asparagine glycan. Catalysis depends on aspartate 711, which acts as the Charge relay system. N-linked (GlcNAc...) asparagine glycosylation is found at asparagine 715 and asparagine 720. The active-site Proton donor is histidine 809. N-linked (GlcNAc...) asparagine glycosylation is found at asparagine 813 and asparagine 825.

The protein belongs to the HMG-CoA reductase family.

It is found in the endoplasmic reticulum membrane. The enzyme catalyses (R)-mevalonate + 2 NADP(+) + CoA = (3S)-3-hydroxy-3-methylglutaryl-CoA + 2 NADPH + 2 H(+). It functions in the pathway metabolic intermediate biosynthesis; (R)-mevalonate biosynthesis; (R)-mevalonate from acetyl-CoA: step 3/3. The activity of HMG-CoA-reductase is suppressed by exogenous mevalonate. Its function is as follows. Synthesis of mevalonate for the production of non-sterol isoprenoids, which are essential for growth differentiation. The chain is 3-hydroxy-3-methylglutaryl-coenzyme A reductase (HMGR) from Agrotis ipsilon (Black cutworm moth).